We begin with the raw amino-acid sequence, 106 residues long: Large ribosomal subunit protein bL21 (106 aa).

It belongs to the bacterial ribosomal protein bL21 family. As to quaternary structure, part of the 50S ribosomal subunit. Contacts protein L20.

Its function is as follows. This protein binds to 23S rRNA in the presence of protein L20. This is Large ribosomal subunit protein bL21 from Coprothermobacter proteolyticus (strain ATCC 35245 / DSM 5265 / OCM 4 / BT).